Consider the following 996-residue polypeptide: Poly [ADP-ribose] polymerase (996 aa).

Residues 1-369 mediate DNA binding; sequence MEIDLPFKVE…TSTILKNISL (369 aa). 2 PARP-type zinc fingers span residues 7 to 89 and 114 to 203; these read FKVE…DNCT and FGIE…PVIK. Zn(2+)-binding residues include Cys-19, Cys-22, His-51, Cys-54, Cys-126, Cys-129, His-161, and Cys-164. Short sequence motifs (nuclear localization signal) lie at residues 211–214 and 232–235; these read KKAK and KIKK. Residues 220-358 enclose the PADR1 zinc-binding domain; sequence EEDAASIKEL…EVRAIRYIPP (139 aa). Residues 286–329 form a zinc ribbon region; it reads GALLPCTDCKGRQLLFHKSGYLCNGDLTEWTKCTKLLKEPERKS. Cys-291, Cys-294, Cys-308, and Cys-318 together coordinate Zn(2+). Positions 370-507 are automodification domain; sequence KKGDELDGPK…SIYTKSVPKS (138 aa). Residues 382–473 enclose the BRCT domain; sequence RERPPLYNIE…AGAINYISSM (92 aa). In terms of domain architecture, WGR spans 527–625; it reads VAHVYVSRNK…ENFVKVAGRM (99 aa). Residues 647 to 764 enclose the PARP alpha-helical domain; it reads KSKLPLSVQD…EIECAYSLLQ (118 aa). The region spanning 773 to 996 is the PARP catalytic domain; sequence NPIDKHYEQL…YMLRMNFKYK (224 aa).

It belongs to the ARTD/PARP family.

The protein resides in the nucleus. It catalyses the reaction NAD(+) + (ADP-D-ribosyl)n-acceptor = nicotinamide + (ADP-D-ribosyl)n+1-acceptor + H(+).. The enzyme catalyses L-aspartyl-[protein] + NAD(+) = 4-O-(ADP-D-ribosyl)-L-aspartyl-[protein] + nicotinamide. It carries out the reaction L-glutamyl-[protein] + NAD(+) = 5-O-(ADP-D-ribosyl)-L-glutamyl-[protein] + nicotinamide. Its function is as follows. Poly-ADP-ribosyltransferase that mediates poly-ADP-ribosylation of proteins and plays a key role in DNA repair. Mainly mediates glutamate and aspartate ADP-ribosylation of target proteins: the ADP-D-ribosyl group of NAD(+) is transferred to the acceptor carboxyl group of glutamate and aspartate residues and further ADP-ribosyl groups are transferred to the 2'-position of the terminal adenosine moiety, building up a polymer with an average chain length of 20-30 units. The sequence is that of Poly [ADP-ribose] polymerase from Sarcophaga peregrina (Flesh fly).